The chain runs to 475 residues: F-box/kelch-repeat protein At1g22040 (475 aa).

The disordered stretch occupies residues 1–28 (MGSVMSLSCSKRKATSQDVECSSESRKR). Residues 41-87 (CRLIPSLPDELSIQILARLPRICYSSVRLVSRRWRSAVSTSEVYSLR) form the F-box domain. Kelch repeat units lie at residues 94–140 (EEWL…KSLS), 182–228 (GLYV…VLNK), 229–279 (KLYV…AFLA), 306–350 (PFFV…VDGE), and 352–401 (YAFD…GFHG).

The sequence is that of F-box/kelch-repeat protein At1g22040 from Arabidopsis thaliana (Mouse-ear cress).